Reading from the N-terminus, the 136-residue chain is Small ribosomal subunit protein uS9 (136 aa).

Belongs to the universal ribosomal protein uS9 family.

The sequence is that of Small ribosomal subunit protein uS9 from Borrelia turicatae (strain 91E135).